Reading from the N-terminus, the 369-residue chain is Glutamate 5-kinase (369 aa).

Lysine 8 lines the ATP pocket. Substrate is bound by residues serine 49, aspartate 136, and asparagine 148. ATP is bound by residues 168–169 and 211–217; these read TD and TGGMATK. The PUA domain occupies 276-354; that stretch reads KGELWLDEGA…TELANILGYA (79 aa).

This sequence belongs to the glutamate 5-kinase family.

Its subcellular location is the cytoplasm. The catalysed reaction is L-glutamate + ATP = L-glutamyl 5-phosphate + ADP. Its pathway is amino-acid biosynthesis; L-proline biosynthesis; L-glutamate 5-semialdehyde from L-glutamate: step 1/2. Its function is as follows. Catalyzes the transfer of a phosphate group to glutamate to form L-glutamate 5-phosphate. This is Glutamate 5-kinase from Thermosynechococcus vestitus (strain NIES-2133 / IAM M-273 / BP-1).